Here is a 284-residue protein sequence, read N- to C-terminus: MFKKFKPVTPGTRQLILPSFDELTTQGELEGSSSKRSVRPNKKLSFFKKSSGGRDNLGHISCRHRGGGVRRHYRVIDFKRNKDGVEAKVASVEYDPNRSAYIALLNYVDGEKRYILAPKGIKRGDRVISGEGSPFKTGCCMTLKSIPLGISVHNVEMRPGSGGKLVRSAGLSAQIIAKTDGYVTLKMPSGEFRMLNEMCRATVGEVSNADHNLCVDGKAGRRRWKGIRPTVRGTAMNPVDHPHGGGEGRHNGYISQTPWGKVTKGLKTRDKRKSNKWIVKDRRK.

2 disordered regions span residues 28 to 50 (ELEG…FKKS) and 232 to 284 (RGTA…DRRK). The span at 36–46 (RSVRPNKKLSF) shows a compositional bias: basic residues. Basic and acidic residues predominate over residues 240–250 (DHPHGGGEGRH). Basic residues predominate over residues 264-284 (KGLKTRDKRKSNKWIVKDRRK).

The protein belongs to the universal ribosomal protein uL2 family. Part of the 50S ribosomal subunit. Forms a bridge to the 30S subunit in the 70S ribosome.

In terms of biological role, one of the primary rRNA binding proteins. Required for association of the 30S and 50S subunits to form the 70S ribosome, for tRNA binding and peptide bond formation. It has been suggested to have peptidyltransferase activity; this is somewhat controversial. Makes several contacts with the 16S rRNA in the 70S ribosome. This is Large ribosomal subunit protein uL2 from Chlamydia muridarum (strain MoPn / Nigg).